Here is a 193-residue protein sequence, read N- to C-terminus: DNA damage-inducible transcript 4-like protein (193 aa).

The protein belongs to the DDIT4 family.

The protein localises to the cytoplasm. Functionally, inhibits cell growth by regulating the TOR signaling pathway upstream of the TSC1-TSC2 complex and downstream of AKT1. This is DNA damage-inducible transcript 4-like protein (Ddit4l) from Mus musculus (Mouse).